Here is an 855-residue protein sequence, read N- to C-terminus: DNA mismatch repair protein MutS (855 aa).

615–622 (GPNMGGKS) is a binding site for ATP.

The protein belongs to the DNA mismatch repair MutS family.

Its function is as follows. This protein is involved in the repair of mismatches in DNA. It is possible that it carries out the mismatch recognition step. This protein has a weak ATPase activity. In Aliivibrio salmonicida (strain LFI1238) (Vibrio salmonicida (strain LFI1238)), this protein is DNA mismatch repair protein MutS.